The following is a 372-amino-acid chain: 4-hydroxy-3-methylbut-2-en-1-yl diphosphate synthase (flavodoxin) (372 aa).

[4Fe-4S] cluster is bound by residues cysteine 270, cysteine 273, cysteine 305, and glutamate 312.

It belongs to the IspG family. The cofactor is [4Fe-4S] cluster.

The enzyme catalyses (2E)-4-hydroxy-3-methylbut-2-enyl diphosphate + oxidized [flavodoxin] + H2O + 2 H(+) = 2-C-methyl-D-erythritol 2,4-cyclic diphosphate + reduced [flavodoxin]. It participates in isoprenoid biosynthesis; isopentenyl diphosphate biosynthesis via DXP pathway; isopentenyl diphosphate from 1-deoxy-D-xylulose 5-phosphate: step 5/6. Its function is as follows. Converts 2C-methyl-D-erythritol 2,4-cyclodiphosphate (ME-2,4cPP) into 1-hydroxy-2-methyl-2-(E)-butenyl 4-diphosphate. In Idiomarina loihiensis (strain ATCC BAA-735 / DSM 15497 / L2-TR), this protein is 4-hydroxy-3-methylbut-2-en-1-yl diphosphate synthase (flavodoxin).